The sequence spans 568 residues: Urease subunit beta (568 aa).

A Urease domain is found at 131–568 (GGIDTHIHFI…LSLAQLYNLF (438 aa)). Ni(2+)-binding residues include His136, His138, and Lys219. Position 219 is an N6-carboxylysine (Lys219). His221 is a binding site for substrate. Positions 248 and 274 each coordinate Ni(2+). His321 serves as the catalytic Proton donor. Ni(2+) is bound at residue Asp361.

The protein belongs to the metallo-dependent hydrolases superfamily. Urease alpha subunit family. As to quaternary structure, heterohexamer of 3 UreA (alpha) and 3 UreB (beta) subunits. The cofactor is Ni cation. Carboxylation allows a single lysine to coordinate two nickel ions.

Its subcellular location is the cytoplasm. It carries out the reaction urea + 2 H2O + H(+) = hydrogencarbonate + 2 NH4(+). The protein operates within nitrogen metabolism; urea degradation; CO(2) and NH(3) from urea (urease route): step 1/1. This Helicobacter heilmannii protein is Urease subunit beta.